The following is a 185-amino-acid chain: Fimbrial subunit type 1 (185 aa).

A signal peptide spans 1–22 (MRHKLMTSTIASLMFVAAAAVA). Cysteine 46 and cysteine 86 are joined by a disulfide.

The protein belongs to the fimbrial protein family.

It localises to the fimbrium. The polypeptide is Fimbrial subunit type 1 (Salmonella typhimurium).